Here is a 379-residue protein sequence, read N- to C-terminus: Succinyl-diaminopimelate desuccinylase (379 aa).

Zn(2+) is bound at residue histidine 70. Aspartate 72 is a catalytic residue. Zn(2+) is bound at residue aspartate 103. Glutamate 137 acts as the Proton acceptor in catalysis. 3 residues coordinate Zn(2+): glutamate 138, glutamate 166, and histidine 352.

The protein belongs to the peptidase M20A family. DapE subfamily. In terms of assembly, homodimer. Requires Zn(2+) as cofactor. Co(2+) serves as cofactor.

The catalysed reaction is N-succinyl-(2S,6S)-2,6-diaminopimelate + H2O = (2S,6S)-2,6-diaminopimelate + succinate. It participates in amino-acid biosynthesis; L-lysine biosynthesis via DAP pathway; LL-2,6-diaminopimelate from (S)-tetrahydrodipicolinate (succinylase route): step 3/3. Its function is as follows. Catalyzes the hydrolysis of N-succinyl-L,L-diaminopimelic acid (SDAP), forming succinate and LL-2,6-diaminopimelate (DAP), an intermediate involved in the bacterial biosynthesis of lysine and meso-diaminopimelic acid, an essential component of bacterial cell walls. This is Succinyl-diaminopimelate desuccinylase from Shewanella sp. (strain W3-18-1).